Reading from the N-terminus, the 302-residue chain is Probable 2-(5''-triphosphoribosyl)-3'-dephosphocoenzyme-A synthase 1 (302 aa).

It belongs to the CitG/MdcB family.

The catalysed reaction is 3'-dephospho-CoA + ATP = 2'-(5''-triphospho-alpha-D-ribosyl)-3'-dephospho-CoA + adenine. The sequence is that of Probable 2-(5''-triphosphoribosyl)-3'-dephosphocoenzyme-A synthase 1 from Salmonella paratyphi A (strain ATCC 9150 / SARB42).